The following is a 144-amino-acid chain: Large ribosomal subunit protein uL15 (144 aa).

The segment at 1–58 (MKLNNLSPAPGSKHAEKRVGRGIGSGLGKTGGRGHKGQKSRSGGSVKPGFEGGQMPLQ) is disordered. Positions 21–31 (RGIGSGLGKTG) are enriched in gly residues.

Belongs to the universal ribosomal protein uL15 family. As to quaternary structure, part of the 50S ribosomal subunit.

Functionally, binds to the 23S rRNA. The protein is Large ribosomal subunit protein uL15 of Chromohalobacter salexigens (strain ATCC BAA-138 / DSM 3043 / CIP 106854 / NCIMB 13768 / 1H11).